The following is a 178-amino-acid chain: Caveolin-1 (178 aa).

S2 carries the post-translational modification N-acetylserine. S2 bears the Phosphoserine mark. Residues 2–94 (SGGKYVDSEG…WKASFTTFTV (93 aa)) form a required for homooligomerization region. Topologically, residues 2–104 (SGGKYVDSEG…TKYWFYRLLS (103 aa)) are cytoplasmic. K5 is subject to N6-acetyllysine; alternate. K5 is covalently cross-linked (Glycyl lysine isopeptide (Lys-Gly) (interchain with G-Cter in ubiquitin); alternate). Y6 carries the post-translational modification Phosphotyrosine. S9 is subject to Phosphoserine. Position 14 is a phosphotyrosine; by ABL1 (Y14). Y25 bears the Phosphotyrosine mark. Residues K26 and K30 each participate in a glycyl lysine isopeptide (Lys-Gly) (interchain with G-Cter in ubiquitin) cross-link. S37 is modified (phosphoserine). Glycyl lysine isopeptide (Lys-Gly) (interchain with G-Cter in ubiquitin) cross-links involve residues K39, K47, and K57. The interval 82-94 (DGIWKASFTTFTV) is interaction with CAVIN3. The segment at residues 105-125 (ALFGIPMALIWGIYFAILSFL) is an intramembrane region (helical). Residues 126–178 (HIWAVVPCIKSFLIEIQCISRVYSIYVHTFCDPFFEAVGKIFSNIRINMQKET) lie on the Cytoplasmic side of the membrane. Positions 131–142 (VPCIKSFLIEIQ) are interacts with SPRY1, SPRY2, SPRY3 and SPRY4. Residues C133, C143, and C156 are each lipidated (S-palmitoyl cysteine). The tract at residues 149 to 160 (SIYVHTFCDPFF) is interacts with SPRY1, SPRY2, and SPRY4. Residues 167 to 178 (FSNIRINMQKET) form an interacts with SPRY1, SPRY2, SPRY3 and SPRY4 region.

Belongs to the caveolin family. In terms of assembly, homooligomer. Interacts with BMX, BTK, GLIPR2, NOSTRIN, SNAP25 and STX1A. Interacts with PACSIN2; this interaction induces membrane tubulation. Interacts (via the N-terminus) with DPP4; the interaction is direct. Interacts with SLC7A9. Interacts with CTNNB1, CDH1 and JUP. Interacts with TGFBR1. Interacts with CAVIN3 (via leucine-zipper domain) in a cholesterol-sensitive manner. Interacts with CAVIN1. Interacts with EHD2 in a cholesterol-dependent manner. Forms a ternary complex with UBXN6 and VCP; mediates CAV1 targeting to lysosomes for degradation. Interacts with ABCG1; this interaction regulates ABCG1-mediated cholesterol efflux. Interacts with NEU3; this interaction enhances NEU3 sialidase activity within caveola. Interacts (via C-terminus) with SPRY1, SPRY2 (via C-terminus), SPRY3, and SPRY4. Interacts with IGFBP5; this interaction allows trafficking of IGFBP5 from the plasma membrane to the nucleus. Post-translationally, phosphorylation of isoform Beta on serine residues is constitutive. Phosphorylated at Tyr-14 by ABL1 in response to oxidative stress. In terms of processing, ubiquitinated. Undergo monoubiquitination and multi- and/or polyubiquitination. Monoubiquitination of N-terminal lysines promotes integration in a ternary complex with UBXN6 and VCP which promotes oligomeric CAV1 targeting to lysosomes for degradation. Ubiquitinated by ZNRF1; leading to degradation and modulation of the TLR4-mediated immune response.

The protein resides in the golgi apparatus membrane. The protein localises to the cell membrane. It is found in the membrane. It localises to the caveola. Its subcellular location is the membrane raft. The protein resides in the golgi apparatus. The protein localises to the trans-Golgi network. In terms of biological role, may act as a scaffolding protein within caveolar membranes. Forms a stable heterooligomeric complex with CAV2 that targets to lipid rafts and drives caveolae formation. Mediates the recruitment of CAVIN proteins (CAVIN1/2/3/4) to the caveolae. Interacts directly with G-protein alpha subunits and can functionally regulate their activity. Involved in the costimulatory signal essential for T-cell receptor (TCR)-mediated T-cell activation. Its binding to DPP4 induces T-cell proliferation and NF-kappa-B activation in a T-cell receptor/CD3-dependent manner. Recruits CTNNB1 to caveolar membranes and may regulate CTNNB1-mediated signaling through the Wnt pathway. Negatively regulates TGFB1-mediated activation of SMAD2/3 by mediating the internalization of TGFBR1 from membrane rafts leading to its subsequent degradation. Binds 20(S)-hydroxycholesterol (20(S)-OHC). In Canis lupus familiaris (Dog), this protein is Caveolin-1 (CAV1).